Consider the following 329-residue polypeptide: Isopentenyl-diphosphate delta-isomerase (329 aa).

Substrate is bound at residue 4–5 (RK). Residues 59–61 (AMT), S89, and N116 each bind FMN. Q146 is a binding site for substrate. Residue E147 coordinates Mg(2+). FMN contacts are provided by residues K178, S203, T208, 252-254 (GVR), and 273-274 (SR).

This sequence belongs to the IPP isomerase type 2 family. In terms of assembly, homooctamer. Dimer of tetramers. FMN is required as a cofactor. Requires NADPH as cofactor. Mg(2+) serves as cofactor.

The protein resides in the cytoplasm. The catalysed reaction is isopentenyl diphosphate = dimethylallyl diphosphate. Involved in the biosynthesis of isoprenoids. Catalyzes the 1,3-allylic rearrangement of the homoallylic substrate isopentenyl (IPP) to its allylic isomer, dimethylallyl diphosphate (DMAPP). The protein is Isopentenyl-diphosphate delta-isomerase of Streptococcus pyogenes serotype M28 (strain MGAS6180).